We begin with the raw amino-acid sequence, 160 residues long: Putative NrdI-like protein (160 aa).

It belongs to the NrdI family.

This is Putative NrdI-like protein from Streptococcus pyogenes serotype M6 (strain ATCC BAA-946 / MGAS10394).